Reading from the N-terminus, the 336-residue chain is MTEAQTACATTETPVAAPAAPRWRVADVIALYELPFNDLLFRAQQTHREHFDANAIQLSTLLSIKTGGCEEDCGYCSQSAHHDTGLKAEKLMEVDAVLAAARTAKENGATRFCMGAAWRNPKDRHIEPIKEMIRGVKDMGLETCVTLGMLEEHQAKALAEAGLDYYNHNLDTSPEFYGQIISTRTYQDRLDTLERVRDAGINVCCGGIIGMGESRRERAGLIAQLANMNPYPESVPINNLVAIEGTPLENAQALDPFEFVRTIAVARITMPKAMVRLSAGREQLDDAMQALCFLAGANSMFYGDVLLTTGNPRAEADRKLLARLGMWASEASQLSA.

Residues 54–281 (NAIQLSTLLS…KAMVRLSAGR (228 aa)) enclose the Radical SAM core domain. [4Fe-4S] cluster-binding residues include C69, C73, and C76. C113, C144, C204, and R276 together coordinate [2Fe-2S] cluster.

Belongs to the radical SAM superfamily. Biotin synthase family. Homodimer. It depends on [4Fe-4S] cluster as a cofactor. The cofactor is [2Fe-2S] cluster.

The enzyme catalyses (4R,5S)-dethiobiotin + (sulfur carrier)-SH + 2 reduced [2Fe-2S]-[ferredoxin] + 2 S-adenosyl-L-methionine = (sulfur carrier)-H + biotin + 2 5'-deoxyadenosine + 2 L-methionine + 2 oxidized [2Fe-2S]-[ferredoxin]. Its pathway is cofactor biosynthesis; biotin biosynthesis; biotin from 7,8-diaminononanoate: step 2/2. Catalyzes the conversion of dethiobiotin (DTB) to biotin by the insertion of a sulfur atom into dethiobiotin via a radical-based mechanism. The sequence is that of Biotin synthase from Burkholderia pseudomallei (strain 1106a).